A 304-amino-acid chain; its full sequence is Lipid droplet-associated triacylglycerol lipase (304 aa).

Topologically, residues methionine 1–arginine 155 are lumenal. N-linked (GlcNAc...) asparagine glycosylation occurs at asparagine 95. The GXSXG signature appears at glycine 107–glycine 111. Serine 109 serves as the catalytic Nucleophile. The stretch at tyrosine 156 to leucine 176 is an intramembrane region. The Lumenal portion of the chain corresponds to serine 177–phenylalanine 304.

This sequence belongs to the AB hydrolase superfamily. LDAH family.

It localises to the lipid droplet. It is found in the membrane. It carries out the reaction a triacylglycerol + H2O = a diacylglycerol + a fatty acid + H(+). In terms of biological role, shows both triacylglycerol (TAG) lipase and ester hydrolase activities. May play a role in TAG homeostasis. The sequence is that of Lipid droplet-associated triacylglycerol lipase from Saccharomyces cerevisiae (strain ATCC 204508 / S288c) (Baker's yeast).